Here is a 670-residue protein sequence, read N- to C-terminus: ATP-dependent RNA helicase DDX18 (670 aa).

Composition is skewed to polar residues over residues 31-42 (SNLTLSETQNGD) and 83-105 (VTKS…SSNS). The tract at residues 31 to 169 (SNLTLSETQN…ESEVPSLPLG (139 aa)) is disordered. The segment covering 117 to 154 (MVNDAEPDTKKAKTENKGKSEEESAETTKETENNVEKP) has biased composition (basic and acidic residues). The short motif at 179 to 207 (FASLCNLVNENTLKAIKEMGFTNMTEIQH) is the Q motif element. In terms of domain architecture, Helicase ATP-binding spans 210–385 (IRPLLEGRDL…RISLKKEPLY (176 aa)). 223–230 (AKTGSGKT) is a binding site for ATP. The short motif at 333 to 336 (DEAD) is the DEAD box element. Residues 399 to 569 (GLEQGYVVCP…DIQSQLEKLI (171 aa)) form the Helicase C-terminal domain.

The protein belongs to the DEAD box helicase family. DDX18/HAS1 subfamily. In terms of assembly, interacts with NOL8; the interaction is RNA-dependent. Interacts with PRC2 complex components EZH2, SUZ2 and JARID2; these interactions prevent deposition of the repressive H3K27me3 mark onto rDNA in pluripotent cells.

Its subcellular location is the nucleus. It is found in the nucleolus. It localises to the chromosome. It catalyses the reaction ATP + H2O = ADP + phosphate + H(+). In terms of biological role, ATP-dependent RNA helicase that plays a role in the regulation of R-loop homeostasis in both endogenous R-loop-prone regions and at sites of DNA damage. At endogenous loci such as actively transcribed genes, may act as a helicase to resolve the formation of R-loop during transcription and prevent the interference of R-loop with DNA-replication machinery. Also participates in the removal of DNA-lesion-associated R-loop. Plays an essential role for establishing pluripotency during embryogenesis and for pluripotency maintenance in embryonic stem cells. Mechanistically, prevents the polycomb repressive complex 2 (PRC2) from accessing rDNA loci and protects the active chromatin status in nucleolus. This Homo sapiens (Human) protein is ATP-dependent RNA helicase DDX18 (DDX18).